The following is a 281-amino-acid chain: 39kDa core protein OPG130 (281 aa).

Residues 1 to 22 (MDFFNKFSQGLAESSTPKSSIY) show a composition bias toward polar residues. 3 disordered regions span residues 1–33 (MDFF…DTKK), 91–112 (ILLP…TSSD), and 149–192 (NKDQ…PQPP). Over residues 24 to 33 (SEEKDPDTKK) the composition is skewed to basic and acidic residues. Over residues 94–112 (PSSTAPTPKPRQQTNTSSD) the composition is skewed to polar residues. Residues 154–175 (TTTPPSTQPSQTLPTTTCTQQS) are compositionally biased toward low complexity.

It belongs to the orthopoxvirus OPG130 family. As to quaternary structure, interacts with OPG136 and its cleaved form. Its phosphorylation state is regulated by the OPG054 kinase and the OPG106 phosphatase.

It is found in the virion. It localises to the host endoplasmic reticulum-Golgi intermediate compartment membrane. In terms of biological role, component of the virion core. Participates in virion assembly. This Vaccinia virus (strain Copenhagen) (VACV) protein is 39kDa core protein OPG130 (OPG130).